The sequence spans 253 residues: FAS1 domain-containing protein CAGL0M08734g (253 aa).

The N-terminal stretch at 1-16 (MVALKYVLVPVALVAA) is a signal peptide. Residues 84-248 (DIYLDSQISV…GVILVIDATL (165 aa)) form the FAS1 domain.

It localises to the vacuole. The sequence is that of FAS1 domain-containing protein CAGL0M08734g from Candida glabrata (strain ATCC 2001 / BCRC 20586 / JCM 3761 / NBRC 0622 / NRRL Y-65 / CBS 138) (Yeast).